The chain runs to 447 residues: Adenylosuccinate synthetase (447 aa).

GTP is bound by residues 12-18 (GDEGKGK) and 40-42 (GHT). Asp-13 serves as the catalytic Proton acceptor. Mg(2+) is bound by residues Asp-13 and Gly-40. IMP is bound by residues 13 to 16 (DEGK), 38 to 41 (NAGH), Thr-128, Arg-142, Gln-223, Thr-238, and Arg-302. His-41 (proton donor) is an active-site residue. 298–304 (TTTGRRR) contributes to the substrate binding site. GTP contacts are provided by residues Arg-304, 330–332 (KLD), and 412–414 (SLG).

It belongs to the adenylosuccinate synthetase family. Homodimer. The cofactor is Mg(2+).

It localises to the cytoplasm. The enzyme catalyses IMP + L-aspartate + GTP = N(6)-(1,2-dicarboxyethyl)-AMP + GDP + phosphate + 2 H(+). It functions in the pathway purine metabolism; AMP biosynthesis via de novo pathway; AMP from IMP: step 1/2. Plays an important role in the de novo pathway of purine nucleotide biosynthesis. Catalyzes the first committed step in the biosynthesis of AMP from IMP. The chain is Adenylosuccinate synthetase from Microcystis aeruginosa (strain NIES-843 / IAM M-2473).